A 647-amino-acid chain; its full sequence is Phosphomethylpyrimidine synthase (647 aa).

Substrate is bound by residues asparagine 235, methionine 264, tyrosine 293, histidine 329, 349–351 (SRG), 390–393 (DGLR), and glutamate 429. Zn(2+) is bound at residue histidine 433. Substrate is bound at residue tyrosine 456. Histidine 497 serves as a coordination point for Zn(2+). Residues cysteine 577, cysteine 580, and cysteine 585 each contribute to the [4Fe-4S] cluster site. Residues 623-647 (KSAEFKASGSELYHPAVSHEEVAEG) are disordered.

It belongs to the ThiC family. In terms of assembly, homodimer. [4Fe-4S] cluster is required as a cofactor.

The catalysed reaction is 5-amino-1-(5-phospho-beta-D-ribosyl)imidazole + S-adenosyl-L-methionine = 4-amino-2-methyl-5-(phosphooxymethyl)pyrimidine + CO + 5'-deoxyadenosine + formate + L-methionine + 3 H(+). The protein operates within cofactor biosynthesis; thiamine diphosphate biosynthesis. Its function is as follows. Catalyzes the synthesis of the hydroxymethylpyrimidine phosphate (HMP-P) moiety of thiamine from aminoimidazole ribotide (AIR) in a radical S-adenosyl-L-methionine (SAM)-dependent reaction. This chain is Phosphomethylpyrimidine synthase, found in Vibrio vulnificus (strain CMCP6).